We begin with the raw amino-acid sequence, 75 residues long: Alpha-elapitoxin-Bc2c (75 aa).

A signal peptide spans 1 to 2; sequence YT. Cystine bridges form between C5/C24, C17/C45, C30/C34, C49/C60, and C61/C66.

The protein belongs to the three-finger toxin family. Long-chain subfamily. Type II alpha-neurotoxin sub-subfamily. In terms of assembly, monomer in solution, homodimer in crystal state. Expressed by the venom gland.

It is found in the secreted. Functionally, binds to muscular and neuronal nicotinic acetylcholine receptor (nAChR) and inhibits acetylcholine from binding to the receptor, thereby impairing neuromuscular and neuronal transmission. Blocks muscle type nAChR. Also binds with high affinity to alpha-7/CHRNA7 nAChRs. In addition, shows a weak inhibition of neuronal alpha-3-beta-2/CHRNA3-CHRNB2 nAChR. Selectively binds to alpha-1-delta subunit interface of the mouse muscle nicotinic acetylcholine receptor, with a 10-fold higher affinity for the adult than for the fetal receptors. In vivo, when intraperitoneally injected into mice, causes flaccid paralysis and respiratory distress, followed by death within 2-4 hours. This chain is Alpha-elapitoxin-Bc2c, found in Bungarus candidus (Malayan krait).